Here is a 209-residue protein sequence, read N- to C-terminus: Ribosomal RNA large subunit methyltransferase E (209 aa).

The S-adenosyl-L-methionine site is built by glycine 63, tryptophan 65, aspartate 83, aspartate 99, and aspartate 124. Residue lysine 164 is the Proton acceptor of the active site.

Belongs to the class I-like SAM-binding methyltransferase superfamily. RNA methyltransferase RlmE family.

Its subcellular location is the cytoplasm. It catalyses the reaction uridine(2552) in 23S rRNA + S-adenosyl-L-methionine = 2'-O-methyluridine(2552) in 23S rRNA + S-adenosyl-L-homocysteine + H(+). Functionally, specifically methylates the uridine in position 2552 of 23S rRNA at the 2'-O position of the ribose in the fully assembled 50S ribosomal subunit. This is Ribosomal RNA large subunit methyltransferase E from Vibrio atlanticus (strain LGP32) (Vibrio splendidus (strain Mel32)).